The sequence spans 236 residues: 2-C-methyl-D-erythritol 4-phosphate cytidylyltransferase (236 aa).

This sequence belongs to the IspD/TarI cytidylyltransferase family. IspD subfamily. Homodimer.

It catalyses the reaction 2-C-methyl-D-erythritol 4-phosphate + CTP + H(+) = 4-CDP-2-C-methyl-D-erythritol + diphosphate. Its pathway is isoprenoid biosynthesis; isopentenyl diphosphate biosynthesis via DXP pathway; isopentenyl diphosphate from 1-deoxy-D-xylulose 5-phosphate: step 2/6. Its function is as follows. Catalyzes the formation of 4-diphosphocytidyl-2-C-methyl-D-erythritol from CTP and 2-C-methyl-D-erythritol 4-phosphate (MEP). In Salmonella schwarzengrund (strain CVM19633), this protein is 2-C-methyl-D-erythritol 4-phosphate cytidylyltransferase.